The sequence spans 486 residues: Cephamycin export protein CmcT (486 aa).

Transmembrane regions (helical) follow at residues 24 to 44 (VLAC…TVAL), 56 to 76 (ASLQ…LLFG), 88 to 108 (VFLG…LATS), 121 to 141 (AGAA…FAEG), 153 to 173 (AVAL…TEFL), 178 to 198 (VLLV…RVLA), 210 to 230 (LDLP…LGVS), 241 to 261 (AVAV…VVEA), 284 to 304 (LAML…TLSM), 317 to 337 (LGFV…VPWL), 345 to 365 (VLIA…SLLT), 369 to 389 (AYLG…GLVG), 418 to 438 (FGGA…TSGS), and 450 to 470 (FVGI…LPAL).

Belongs to the major facilitator superfamily.

The protein resides in the cell membrane. In terms of biological role, involved in cephamycin export. This is Cephamycin export protein CmcT (cmcT) from Amycolatopsis lactamdurans (Nocardia lactamdurans).